Consider the following 109-residue polypeptide: Protein FAM32A-like (109 aa).

A disordered region spans residues 1-48 (MSEYKSVQKGSLKLKGVSLPSKKKKKKNKEMKRLEEQVLTSENEEGTK). Positions 9 to 20 (KGSLKLKGVSLP) are enriched in low complexity. The segment covering 21–30 (SKKKKKKNKE) has biased composition (basic residues).

This sequence belongs to the FAM32 family.

The protein localises to the nucleus. In terms of biological role, may induce G2 arrest and apoptosis. May also increase cell sensitivity to apoptotic stimuli. The chain is Protein FAM32A-like (fam32al) from Danio rerio (Zebrafish).